The sequence spans 139 residues: Nucleoside diphosphate kinase (139 aa).

Lys-11, Phe-59, Arg-87, Thr-93, Arg-104, and Asn-114 together coordinate ATP. The active-site Pros-phosphohistidine intermediate is His-117.

The protein belongs to the NDK family. Homotetramer. The cofactor is Mg(2+).

The protein localises to the cytoplasm. It carries out the reaction a 2'-deoxyribonucleoside 5'-diphosphate + ATP = a 2'-deoxyribonucleoside 5'-triphosphate + ADP. The enzyme catalyses a ribonucleoside 5'-diphosphate + ATP = a ribonucleoside 5'-triphosphate + ADP. In terms of biological role, major role in the synthesis of nucleoside triphosphates other than ATP. The ATP gamma phosphate is transferred to the NDP beta phosphate via a ping-pong mechanism, using a phosphorylated active-site intermediate. The polypeptide is Nucleoside diphosphate kinase (Wolbachia pipientis wMel).